Here is a 194-residue protein sequence, read N- to C-terminus: Peptidyl-tRNA hydrolase (194 aa).

TRNA is bound at residue tyrosine 17. Histidine 22 (proton acceptor) is an active-site residue. Residues phenylalanine 68, asparagine 70, and asparagine 116 each coordinate tRNA.

The protein belongs to the PTH family. Monomer.

It is found in the cytoplasm. The enzyme catalyses an N-acyl-L-alpha-aminoacyl-tRNA + H2O = an N-acyl-L-amino acid + a tRNA + H(+). Its function is as follows. Hydrolyzes ribosome-free peptidyl-tRNAs (with 1 or more amino acids incorporated), which drop off the ribosome during protein synthesis, or as a result of ribosome stalling. Functionally, catalyzes the release of premature peptidyl moieties from peptidyl-tRNA molecules trapped in stalled 50S ribosomal subunits, and thus maintains levels of free tRNAs and 50S ribosomes. The chain is Peptidyl-tRNA hydrolase from Glaesserella parasuis serovar 5 (strain SH0165) (Haemophilus parasuis).